The following is a 153-amino-acid chain: Ubiquitin/ISG15-conjugating enzyme E2 L6 (153 aa).

A UBC core domain is found at 2–149 (TASKRVAKEL…AEEFTLQYGV (148 aa)). Residue C86 is the Glycyl thioester intermediate of the active site.

Belongs to the ubiquitin-conjugating enzyme family. As to quaternary structure, interacts with RNF19A, RNF19B and RNF144B. Interacts with FLT3 (tyrosine phosphorylated). Post-translationally, ISGylated.

It catalyses the reaction S-ubiquitinyl-[E1 ubiquitin-activating enzyme]-L-cysteine + [E2 ubiquitin-conjugating enzyme]-L-cysteine = [E1 ubiquitin-activating enzyme]-L-cysteine + S-ubiquitinyl-[E2 ubiquitin-conjugating enzyme]-L-cysteine.. The protein operates within protein modification; protein ubiquitination. Its function is as follows. Catalyzes the covalent attachment of ubiquitin to other proteins. Functions in the E6/E6-AP-induced ubiquitination of p53/TP53. Promotes ubiquitination and subsequent proteasomal degradation of FLT3. This is Ubiquitin/ISG15-conjugating enzyme E2 L6 (Ube2l6) from Rattus norvegicus (Rat).